Consider the following 337-residue polypeptide: Holliday junction branch migration complex subunit RuvB (337 aa).

The tract at residues 4–184 is large ATPase domain (RuvB-L); it reads ADRLIEPIAS…FGIVQRLEFY (181 aa). ATP contacts are provided by residues Ile23, Arg24, Gly65, Lys68, Thr69, Thr70, 131–133, Arg174, Tyr184, and Arg221; that span reads EDY. Mg(2+) is bound at residue Thr69. The tract at residues 185–255 is small ATPAse domain (RuvB-S); the sequence is NVADLSTIVS…TAAAALDMLE (71 aa). The segment at 258–337 is head domain (RuvB-H); the sequence is SEGFDIMDRK…FGITKDQTKD (80 aa). 3 residues coordinate DNA: Arg294, Arg313, and Arg318.

Belongs to the RuvB family. Homohexamer. Forms an RuvA(8)-RuvB(12)-Holliday junction (HJ) complex. HJ DNA is sandwiched between 2 RuvA tetramers; dsDNA enters through RuvA and exits via RuvB. An RuvB hexamer assembles on each DNA strand where it exits the tetramer. Each RuvB hexamer is contacted by two RuvA subunits (via domain III) on 2 adjacent RuvB subunits; this complex drives branch migration. In the full resolvosome a probable DNA-RuvA(4)-RuvB(12)-RuvC(2) complex forms which resolves the HJ.

It is found in the cytoplasm. The catalysed reaction is ATP + H2O = ADP + phosphate + H(+). Its function is as follows. The RuvA-RuvB-RuvC complex processes Holliday junction (HJ) DNA during genetic recombination and DNA repair, while the RuvA-RuvB complex plays an important role in the rescue of blocked DNA replication forks via replication fork reversal (RFR). RuvA specifically binds to HJ cruciform DNA, conferring on it an open structure. The RuvB hexamer acts as an ATP-dependent pump, pulling dsDNA into and through the RuvAB complex. RuvB forms 2 homohexamers on either side of HJ DNA bound by 1 or 2 RuvA tetramers; 4 subunits per hexamer contact DNA at a time. Coordinated motions by a converter formed by DNA-disengaged RuvB subunits stimulates ATP hydrolysis and nucleotide exchange. Immobilization of the converter enables RuvB to convert the ATP-contained energy into a lever motion, pulling 2 nucleotides of DNA out of the RuvA tetramer per ATP hydrolyzed, thus driving DNA branch migration. The RuvB motors rotate together with the DNA substrate, which together with the progressing nucleotide cycle form the mechanistic basis for DNA recombination by continuous HJ branch migration. Branch migration allows RuvC to scan DNA until it finds its consensus sequence, where it cleaves and resolves cruciform DNA. This Colwellia psychrerythraea (strain 34H / ATCC BAA-681) (Vibrio psychroerythus) protein is Holliday junction branch migration complex subunit RuvB.